The chain runs to 627 residues: Neuronal acetylcholine receptor subunit alpha-4 (627 aa).

Residues 1-26 (MELGGPGAPRLLPPLLLLLGTGLLRA) form the signal peptide. Over 27–249 (SSHVETRAHA…RRLPLFYTIN (223 aa)) the chain is Extracellular. Asn57 is a glycosylation site (N-linked (GlcNAc...) asparagine). Residues Val76 and Glu78 each contribute to the Ca(2+) site. N-linked (GlcNAc...) asparagine glycosylation is found at Asn107 and Asn174. Intrachain disulfides connect Cys161–Cys175 and Cys225–Cys226. Residues 250-269 (LIIPCLLISCLTVLVFYLPS) traverse the membrane as a helical segment. Cys271 carries S-palmitoyl cysteine lipidation. 2 consecutive transmembrane segments (helical) span residues 275-291 (ITLCISVLLSLTVFLLL) and 306-330 (IGEYLLFTMIFVTLSIVITVFVLNV). Residues 331–600 (HHRSPRTHTM…WKYVAMVIDR (270 aa)) are Cytoplasmic-facing. 2 disordered regions span residues 382 to 481 (PRFW…VEGG) and 496 to 561 (DDAA…LPLS). The residue at position 424 (Ser424) is a Phosphoserine. A compositionally biased stretch (low complexity) spans 501 to 511 (EADGQAAGALA). Phosphoserine is present on residues Ser538 and Ser541. Polar residues predominate over residues 538-548 (SSVSPSATVKT). Residues 601–619 (IFLWMFIIVCLLGTVGLFL) form a helical membrane-spanning segment.

The protein belongs to the ligand-gated ion channel (TC 1.A.9) family. Acetylcholine receptor (TC 1.A.9.1) subfamily. Alpha-4/CHRNA4 sub-subfamily. Neuronal AChR is composed of two different types of subunits: alpha and beta. CHRNA4 forms heteropentameric neuronal acetylcholine receptors with CHRNB2 and CHRNB4, as well as CHRNA5 and CHRNB3 as accesory subunits. Found in two major stoichiometric forms, LS (low agonist sensitivity): (CHRNA4)3:(CHRNB2)2 and HS (high agonist sensitivity): (CHRNA4)2:(CHRNB2)3, the two stoichiometric forms differ in their unitary conductance, calcium permeability, ACh sensitivity and potentiation by divalent cation. Cells produce predominantly an (CHRNA4)3:(CHRNB2)2 nAChR. The (CHRNA4)2:(CHRNB2)3 expression is selectively up-regulated by nicotine and has lower single channel conductance and calcium permeability. In the striatum, also forms CHRNA4:CHRNA6:CHRNB2 complexes. Also found in the stoichiometric form: (CHRNA4:CHRNB2)2:CHRNB3. Interacts with RIC3; which is required for proper folding and assembly. Interacts with LYPD6.

The protein resides in the synaptic cell membrane. Its subcellular location is the cell membrane. It catalyses the reaction Ca(2+)(in) = Ca(2+)(out). The catalysed reaction is K(+)(in) = K(+)(out). The enzyme catalyses Na(+)(in) = Na(+)(out). With respect to regulation, activated by a myriad of ligands such as acetylcholine, cytisine, nicotine, choline and epibatidine. Channel potentiation by calcium is stoichiometry-selective, CHRNA4:CHRNB2 nACh receptor is achieved by calcium association with topographically distinct sites framed by anionic residues within the CHRNA4 subunit and between the CHRNA4 and CHRNB2 subunits. nAChR activity is inhibited by the antagonist alpha-conotoxins BuIA, PnIA, GID and MII, small disulfide-constrained peptides from cone snails. Its function is as follows. Component of neuronal acetylcholine receptors (nAChRs) that function as pentameric, ligand-gated cation channels with high calcium permeability among other activities. nAChRs are excitatory neurotrasnmitter receptors formed by a collection of nAChR subunits known to mediate synaptic transmission in the nervous system and the neuromuscular junction. Each nAchR subunit confers differential attributes to channel properties, including activation, deactivation and desensitization kinetics, pH sensitivity, cation permeability, and binding to allosteric modulators. CHRNA4 forms heteropentameric neuronal acetylcholine receptors with CHRNB2 and CHRNB4, as well as CHRNA5 and CHRNB3 as accesory subunits. Is the most abundant nAChR subtype expressed in the central nervous system. Found in two major stoichiometric forms,(CHRNA4)3:(CHRNB2)2 and (CHRNA4)2:(CHRNB2)3, the two stoichiometric forms differ in their unitary conductance, calcium permeability, ACh sensitivity and potentiation by divalent cation. Involved in the modulation of calcium-dependent signaling pathways, influences the release of neurotransmitters, including dopamine, glutamate and GABA. The polypeptide is Neuronal acetylcholine receptor subunit alpha-4 (Homo sapiens (Human)).